A 140-amino-acid chain; its full sequence is Large ribosomal subunit protein uL11 (140 aa).

It belongs to the universal ribosomal protein uL11 family. In terms of assembly, part of the ribosomal stalk of the 50S ribosomal subunit. Interacts with L10 and the large rRNA to form the base of the stalk. L10 forms an elongated spine to which L12 dimers bind in a sequential fashion forming a multimeric L10(L12)X complex. One or more lysine residues are methylated.

Its function is as follows. Forms part of the ribosomal stalk which helps the ribosome interact with GTP-bound translation factors. The polypeptide is Large ribosomal subunit protein uL11 (Enterococcus faecalis (strain ATCC 700802 / V583)).